The following is a 135-amino-acid chain: Large ribosomal subunit protein uL16c (135 aa).

The protein belongs to the universal ribosomal protein uL16 family. Part of the 50S ribosomal subunit.

Its subcellular location is the plastid. It localises to the chloroplast. The sequence is that of Large ribosomal subunit protein uL16c from Jasminum nudiflorum (Winter jasmine).